Consider the following 460-residue polypeptide: Putative E3 ubiquitin-protein ligase RING1b (460 aa).

The segment at M1–S85 is disordered. The segment covering S21–V31 has biased composition (basic and acidic residues). Composition is skewed to acidic residues over residues E32–D51 and E59–D71. Residues C103–R143 form an RING-type zinc finger. The interval Q196–R300 is disordered. A compositionally biased stretch (basic residues) spans R220–C234. Acidic residues predominate over residues D240 to D249. The segment covering Q250–R265 has biased composition (basic and acidic residues). A compositionally biased stretch (low complexity) spans S276–G290.

As to quaternary structure, heterodimer with RING1A. Interacts with CLF. Component of the PRC1-like complex, at least composed of RING1A, RING1B and LHP1.

The protein localises to the nucleus. It carries out the reaction S-ubiquitinyl-[E2 ubiquitin-conjugating enzyme]-L-cysteine + [acceptor protein]-L-lysine = [E2 ubiquitin-conjugating enzyme]-L-cysteine + N(6)-ubiquitinyl-[acceptor protein]-L-lysine.. Its pathway is protein modification; protein ubiquitination. In terms of biological role, putative E3 ubiquitin-protein ligase that mediates monoubiquitination of 'Lys-119' of histone H2A (H2AK119ub), thereby playing a central role in histone code and gene regulation. Its function is as follows. As part of the PRC1-like complex, repress class I KNOX gene expression. PcG PRC1 complex maintains the transcriptionally repressive state of many genes, including Hox genes, throughout development. PcG PRC1 complex acts via chromatin remodeling and modification of histones, rendering chromatin heritably changed in its expressibility. The chain is Putative E3 ubiquitin-protein ligase RING1b (RING1B) from Arabidopsis thaliana (Mouse-ear cress).